A 177-amino-acid chain; its full sequence is Large ribosomal subunit protein uL10 (177 aa).

It belongs to the universal ribosomal protein uL10 family. Part of the ribosomal stalk of the 50S ribosomal subunit. The N-terminus interacts with L11 and the large rRNA to form the base of the stalk. The C-terminus forms an elongated spine to which L12 dimers bind in a sequential fashion forming a multimeric L10(L12)X complex.

In terms of biological role, forms part of the ribosomal stalk, playing a central role in the interaction of the ribosome with GTP-bound translation factors. The chain is Large ribosomal subunit protein uL10 from Legionella pneumophila (strain Corby).